The sequence spans 381 residues: Lipopolysaccharide 1,2-N-acetylglucosaminetransferase (381 aa).

This sequence belongs to the glycosyltransferase group 1 family. Glycosyltransferase 4 subfamily.

It is found in the cell inner membrane. It catalyses the reaction UDP-N-acetyl-alpha-D-glucosamine + [lipopolysaccharide] = UDP + N-acetyl-alpha-D-glucosaminyl-[lipopolysaccharide].. It participates in bacterial outer membrane biogenesis; LPS core biosynthesis. Functionally, transferase involved in the biosynthesis of the core oligosaccharide region of lipopolysaccharide (LPS). Catalyzes the addition of the terminal N-acetyl-D-glucosamine (GlcNAc) group to the outer-core glucose II, the last step of the lipid A-core oligosaccharide biosynthesis. This Salmonella typhimurium (strain LT2 / SGSC1412 / ATCC 700720) protein is Lipopolysaccharide 1,2-N-acetylglucosaminetransferase.